Reading from the N-terminus, the 289-residue chain is Elongation factor Ts (289 aa).

Positions 82–85 (TDFV) are involved in Mg(2+) ion dislocation from EF-Tu.

Belongs to the EF-Ts family.

It is found in the cytoplasm. In terms of biological role, associates with the EF-Tu.GDP complex and induces the exchange of GDP to GTP. It remains bound to the aminoacyl-tRNA.EF-Tu.GTP complex up to the GTP hydrolysis stage on the ribosome. The sequence is that of Elongation factor Ts from Chloroherpeton thalassium (strain ATCC 35110 / GB-78).